Reading from the N-terminus, the 555-residue chain is WRKY transcription factor WRKY24 (555 aa).

Disordered regions lie at residues 133–183 (TAPA…AGAN) and 197–248 (SEMA…CTFP). Residues 163-183 (QQQQQPWGYQQQPAGMDAGAN) show a composition bias toward low complexity. The WRKY 1 DNA-binding region spans 214–278 (SQRRSSDDGY…YKGTHNHAKP (65 aa)). The Nuclear localization signal signature appears at 253-259 (KKKVERS). The segment at 270-365 (KGTHNHAKPQ…DGEGISMAGN (96 aa)) is disordered. Polar residues-rich tracts occupy residues 277 to 294 (KPQNTRRNSGSSAAQVLQ) and 310 to 320 (TAATPENSSAS). Residues 347 to 356 (DSKRWRKDGD) show a composition bias toward basic and acidic residues. The segment at residues 379-444 (SDIDILDDGY…YEGKHNHDVP (66 aa)) is a DNA-binding region (WRKY 2). The interval 466 to 555 (HPYLPNQPPP…DDMFFQNSLY (90 aa)) is transcription repression of gibberellic acid (GA)-induced promoters. The tract at residues 514–555 (FDDARGSYMSQHQQQQRQNDAMHASRAKEEPGDDMFFQNSLY) is disordered.

Belongs to the WRKY group II-a family. Expressed in aleurone cells. Mostly expressed in aleurone layers and leaves, and, to a lower extent, in roots, panicles and embryos.

Its subcellular location is the nucleus. Its function is as follows. Transcription activator. Interacts specifically with the W box (5'-(T)TGAC[CT]-3'), a frequently occurring elicitor-responsive cis-acting element. Negative regulator of both gibberellic acid (GA) and abscisic acid (ABA) signaling in aleurone cells, probably by interfering with GAM1, via the specific repression of GA- and ABA-induced promoters. The protein is WRKY transcription factor WRKY24 of Oryza sativa subsp. japonica (Rice).